The following is a 179-amino-acid chain: Large ribosomal subunit protein uL5 (179 aa).

Belongs to the universal ribosomal protein uL5 family. Part of the 50S ribosomal subunit; part of the 5S rRNA/L5/L18/L25 subcomplex. Contacts the 5S rRNA and the P site tRNA. Forms a bridge to the 30S subunit in the 70S ribosome.

In terms of biological role, this is one of the proteins that bind and probably mediate the attachment of the 5S RNA into the large ribosomal subunit, where it forms part of the central protuberance. In the 70S ribosome it contacts protein S13 of the 30S subunit (bridge B1b), connecting the 2 subunits; this bridge is implicated in subunit movement. Contacts the P site tRNA; the 5S rRNA and some of its associated proteins might help stabilize positioning of ribosome-bound tRNAs. The protein is Large ribosomal subunit protein uL5 of Agathobacter rectalis (strain ATCC 33656 / DSM 3377 / JCM 17463 / KCTC 5835 / VPI 0990) (Eubacterium rectale).